The following is a 198-amino-acid chain: Large ribosomal subunit protein uL23c (198 aa).

The N-terminal 76 residues, 1-76, are a transit peptide targeting the chloroplast; sequence MATTAPNLHS…SFGRDLMVAQ (76 aa).

This sequence belongs to the universal ribosomal protein uL23 family. Component of the chloroplast large ribosomal subunit (LSU). Mature 70S chloroplast ribosomes of higher plants consist of a small (30S) and a large (50S) subunit. The 30S small subunit contains 1 molecule of ribosomal RNA (16S rRNA) and 24 different proteins. The 50S large subunit contains 3 rRNA molecules (23S, 5S and 4.5S rRNA) and 33 different proteins.

Its subcellular location is the plastid. It is found in the chloroplast. In terms of biological role, component of the chloroplast ribosome (chloro-ribosome), a dedicated translation machinery responsible for the synthesis of chloroplast genome-encoded proteins, including proteins of the transcription and translation machinery and components of the photosynthetic apparatus. This Spinacia oleracea (Spinach) protein is Large ribosomal subunit protein uL23c (RPL23).